We begin with the raw amino-acid sequence, 97 residues long: MLIKQFSRRSKNTKVQILLAFAALFVLAVGSYASESKKLDLRDALFSAMFSADYQLNPQERGCRYFLGECKKTSECCEHLACHDKHKWCAWDWTIGK.

Residues 1–33 (MLIKQFSRRSKNTKVQILLAFAALFVLAVGSYA) form the signal peptide. Positions 34–61 (SESKKLDLRDALFSAMFSADYQLNPQER) are excised as a propeptide. 3 disulfides stabilise this stretch: Cys-63-Cys-77, Cys-70-Cys-82, and Cys-76-Cys-89.

It belongs to the neurotoxin 10 (Hwtx-1) family. 12 (Hntx-12) subfamily. In terms of tissue distribution, expressed by the venom gland.

The protein localises to the secreted. Functionally, ion channel inhibitor. This Cyriopagopus hainanus (Chinese bird spider) protein is U6-theraphotoxin-Hhn1a 3.